The chain runs to 313 residues: Ribosomal RNA small subunit methyltransferase H (313 aa).

S-adenosyl-L-methionine is bound by residues 33–35 (AGH), D53, F82, D103, and Q110.

Belongs to the methyltransferase superfamily. RsmH family.

It is found in the cytoplasm. The enzyme catalyses cytidine(1402) in 16S rRNA + S-adenosyl-L-methionine = N(4)-methylcytidine(1402) in 16S rRNA + S-adenosyl-L-homocysteine + H(+). Its function is as follows. Specifically methylates the N4 position of cytidine in position 1402 (C1402) of 16S rRNA. In Acetivibrio thermocellus (strain ATCC 27405 / DSM 1237 / JCM 9322 / NBRC 103400 / NCIMB 10682 / NRRL B-4536 / VPI 7372) (Clostridium thermocellum), this protein is Ribosomal RNA small subunit methyltransferase H.